Reading from the N-terminus, the 483-residue chain is Putative (R)-citramalate synthase CimA (483 aa).

A Pyruvate carboxyltransferase domain is found at 1–245; it reads MRDGEQTPGV…DTGIKHEQIY (245 aa).

The protein belongs to the alpha-IPM synthase/homocitrate synthase family. As to quaternary structure, homodimer.

It catalyses the reaction pyruvate + acetyl-CoA + H2O = (3R)-citramalate + CoA + H(+). The protein operates within amino-acid biosynthesis; L-isoleucine biosynthesis; 2-oxobutanoate from pyruvate: step 1/3. Its function is as follows. Catalyzes the condensation of pyruvate and acetyl-coenzyme A to form (R)-citramalate. The protein is Putative (R)-citramalate synthase CimA of Methanosarcina mazei (strain ATCC BAA-159 / DSM 3647 / Goe1 / Go1 / JCM 11833 / OCM 88) (Methanosarcina frisia).